We begin with the raw amino-acid sequence, 754 residues long: ATP-dependent zinc metalloprotease FtsH (754 aa).

The Cytoplasmic segment spans residues 1-9 (MKQRMKKPS). Residues 10-30 (LGTFILILILIGILAYVLWQF) form a helical membrane-spanning segment. The Extracellular portion of the chain corresponds to 31 to 186 (LSPKLGYKSL…FDRPRGNFLS (156 aa)). Residues 187–207 (SFIVPYIPFLLISLFGFWLFF) traverse the membrane as a helical segment. Over 208-754 (RLSQNSQAGG…ESKIDSSKEQ (547 aa)) the chain is Cytoplasmic. An ATP-binding site is contributed by 277-284 (GPPGTGKT). Histidine 499 contributes to the Zn(2+) binding site. Glutamate 500 is a catalytic residue. Zn(2+) is bound by residues histidine 503 and aspartate 577. Positions 713–754 (QEKSYENEDQNQNSLEAINYNIDDQDDDKNDSESKIDSSKEQ) are disordered. The segment covering 743 to 754 (DSESKIDSSKEQ) has biased composition (basic and acidic residues).

This sequence in the central section; belongs to the AAA ATPase family. In the C-terminal section; belongs to the peptidase M41 family. Homohexamer. Zn(2+) serves as cofactor.

It is found in the cell membrane. Acts as a processive, ATP-dependent zinc metallopeptidase for both cytoplasmic and membrane proteins. Plays a role in the quality control of integral membrane proteins. This Mesomycoplasma conjunctivae (strain ATCC 25834 / NCTC 10147 / HRC/581) (Mycoplasma conjunctivae) protein is ATP-dependent zinc metalloprotease FtsH.